Here is a 387-residue protein sequence, read N- to C-terminus: Paralemmin-1 (387 aa).

N-acetylmethionine is present on methionine 1. The stretch at 7–104 forms a coiled coil; it reads ETISQQERLQ…IEELENADTL (98 aa). 2 disordered regions span residues 22–78 and 98–133; these read RRRQ…QEDE and LENA…DRKA. Composition is skewed to basic and acidic residues over residues 25–41 and 69–78; these read QAEV…DRRQ and DMRKQMQEDE. At serine 116 the chain carries Phosphoserine. Pro residues predominate over residues 116–125; the sequence is SPGPVVPAPC. Residues threonine 142 and threonine 146 each carry the phosphothreonine modification. Serine 163 is modified (phosphoserine). Threonine 244 carries the phosphothreonine modification. Phosphoserine is present on serine 246. Disordered regions lie at residues 246–297 and 334–378; these read SEAG…QEPP and AAEP…DMKK. A compositionally biased stretch (basic and acidic residues) spans 258-273; it reads GPSEEVVRTTPSRREI. The segment covering 286 to 297 has biased composition (low complexity); it reads GPPGIQPGQEPP. Phosphoserine occurs at positions 346 and 369. 2 S-palmitoyl cysteine lipidation sites follow: cysteine 381 and cysteine 383. The residue at position 384 (cysteine 384) is a Cysteine methyl ester. Cysteine 384 is lipidated: S-farnesyl cysteine. Residues 385–387 constitute a propeptide, removed in mature form; that stretch reads SIM.

Belongs to the paralemmin family. Interacts with dopamine receptor DRD3. Phosphorylated.

The protein resides in the cell membrane. It is found in the cell projection. Its subcellular location is the filopodium membrane. It localises to the axon. The protein localises to the dendrite. The protein resides in the dendritic spine. It is found in the basolateral cell membrane. Its subcellular location is the apicolateral cell membrane. Its function is as follows. Involved in plasma membrane dynamics and cell process formation. Necessary for axonal and dendritic filopodia induction, for dendritic spine maturation and synapse formation in a palmitoylation-dependent manner. In Sus scrofa (Pig), this protein is Paralemmin-1 (PALM).